The sequence spans 99 residues: Large ribosomal subunit protein uL23 (99 aa).

This sequence belongs to the universal ribosomal protein uL23 family. Part of the 50S ribosomal subunit. Contacts protein L29, and trigger factor when it is bound to the ribosome.

Its function is as follows. One of the early assembly proteins it binds 23S rRNA. One of the proteins that surrounds the polypeptide exit tunnel on the outside of the ribosome. Forms the main docking site for trigger factor binding to the ribosome. In Pseudomonas entomophila (strain L48), this protein is Large ribosomal subunit protein uL23.